A 223-amino-acid chain; its full sequence is MIPQTLEQLLSQAQSIAGLTFGELADELHIPVPPDLKRDKGWVGMLLERALGATAGSKAEQDFSHLGVELKTLPINAEGYPLETTFVSLAPLVQNSGVKWENSHVRHKLSCVLWMPIEGSRHIPLRERHIGAPILWKPTAEQERQLKQDWEELMDLIVLGKLDQITARIGEVMQLRPKGANSRAVTKGIGKNGEIIDTLPLGFYLRKEFTAQILNAFLDVKPL.

The protein belongs to the MutH family.

Its subcellular location is the cytoplasm. In terms of biological role, sequence-specific endonuclease that cleaves unmethylated GATC sequences. It is involved in DNA mismatch repair. This chain is DNA mismatch repair protein MutH, found in Haemophilus influenzae (strain PittGG).